A 104-amino-acid polypeptide reads, in one-letter code: Protein enhancer of rudimentary (104 aa).

The residue at position 18 (Thr18) is a Phosphothreonine; by CK2. The residue at position 24 (Ser24) is a Phosphoserine; by CK2.

Belongs to the E(R) family.

Acts as an enhancer of the rudimentary gene. Has a role in pyrimidine biosynthesis and the cell cycle. This is Protein enhancer of rudimentary (e(r)) from Drosophila virilis (Fruit fly).